A 101-amino-acid polypeptide reads, in one-letter code: ATP-dependent Clp protease adapter protein ClpS (101 aa).

It belongs to the ClpS family. In terms of assembly, binds to the N-terminal domain of the chaperone ClpA.

Functionally, involved in the modulation of the specificity of the ClpAP-mediated ATP-dependent protein degradation. The chain is ATP-dependent Clp protease adapter protein ClpS from Corynebacterium efficiens (strain DSM 44549 / YS-314 / AJ 12310 / JCM 11189 / NBRC 100395).